The primary structure comprises 378 residues: Protein RecA (378 aa).

ATP is bound at residue 79-86; sequence GPESSGKT.

Belongs to the RecA family.

The protein resides in the cytoplasm. Functionally, can catalyze the hydrolysis of ATP in the presence of single-stranded DNA, the ATP-dependent uptake of single-stranded DNA by duplex DNA, and the ATP-dependent hybridization of homologous single-stranded DNAs. It interacts with LexA causing its activation and leading to its autocatalytic cleavage. In Streptococcus pyogenes serotype M12 (strain MGAS2096), this protein is Protein RecA.